The following is a 289-amino-acid chain: 4-diphosphocytidyl-2-C-methyl-D-erythritol kinase (289 aa).

Lysine 15 is a catalytic residue. 100 to 110 (PVSAGLAGGSA) serves as a coordination point for ATP. Aspartate 140 is a catalytic residue.

This sequence belongs to the GHMP kinase family. IspE subfamily.

The catalysed reaction is 4-CDP-2-C-methyl-D-erythritol + ATP = 4-CDP-2-C-methyl-D-erythritol 2-phosphate + ADP + H(+). Its pathway is isoprenoid biosynthesis; isopentenyl diphosphate biosynthesis via DXP pathway; isopentenyl diphosphate from 1-deoxy-D-xylulose 5-phosphate: step 3/6. Its function is as follows. Catalyzes the phosphorylation of the position 2 hydroxy group of 4-diphosphocytidyl-2C-methyl-D-erythritol. This chain is 4-diphosphocytidyl-2-C-methyl-D-erythritol kinase, found in Anaplasma marginale (strain Florida).